Reading from the N-terminus, the 3364-residue chain is Salivary gland surface protein 1 (3364 aa).

Beta-propeller stretches follow at residues Met1–Ala344 and Phe705–Leu1216. A glycan (N-linked (GlcNAc...) asparagine) is linked at Asn59. Cystine bridges form between Cys251/Cys297 and Cys1128/Cys1139. Residues Val345 to Gln2733 form a rhs/YD-repeats region. Asn1149 carries an N-linked (GlcNAc...) asparagine glycan. The segment at Asn1345–Pro1494 is carbohydrate-binding module (CBM). The interval His1575–Glu1715 is lectin carbohydrate-recognition domain (lectin-CRD). Positions His2225 to Pro2304 are wedge domain. Intrachain disulfides connect Cys2253–Cys2285 and Cys2407–Cys2421. The next 5 helical transmembrane spans lie at Ile2734–Ala2754, Ile2774–Phe2794, Met2805–Ala2825, Trp2844–Ile2864, and Met2878–Met2898. A tox-SGS region spans residues Tyr3126 to Asn3216.

In terms of processing, probably cleaved at the C-terminus. As to expression, female saliva (at protein level). Female salivary gland (at protein level). Not detected in female carcass without salivary glands. Not detected in male tissues.

The protein resides in the cell membrane. The protein localises to the secreted. (Microbial infection) Facilitates, but is not essential for, invasion of salivary glands by Plasmodium gallinaceum. Plays a role in Plasmodium gallinaceum oocyst development in mosquito midgut. Its function is as follows. (Microbial infection) Probably facilitates Zika virus replication in salivary glands. The polypeptide is Salivary gland surface protein 1 (Aedes aegypti (Yellowfever mosquito)).